Consider the following 237-residue polypeptide: N-(5'-phosphoribosyl)anthranilate isomerase (237 aa).

The protein belongs to the TrpF family.

The catalysed reaction is N-(5-phospho-beta-D-ribosyl)anthranilate = 1-(2-carboxyphenylamino)-1-deoxy-D-ribulose 5-phosphate. It functions in the pathway amino-acid biosynthesis; L-tryptophan biosynthesis; L-tryptophan from chorismate: step 3/5. The polypeptide is N-(5'-phosphoribosyl)anthranilate isomerase (Desulfitobacterium hafniense (strain DSM 10664 / DCB-2)).